A 513-amino-acid chain; its full sequence is uncharacterized protein (513 aa).

Residues Met1 to Arg16 are compositionally biased toward basic and acidic residues. Positions Met1–Glu21 are disordered.

This is an uncharacterized protein from Sinorhizobium fredii (strain NBRC 101917 / NGR234).